The following is a 431-amino-acid chain: tRNA(Ile)-lysidine synthase (431 aa).

Position 26–31 (26–31 (SGGIDS)) interacts with ATP.

The protein belongs to the tRNA(Ile)-lysidine synthase family.

The protein localises to the cytoplasm. It carries out the reaction cytidine(34) in tRNA(Ile2) + L-lysine + ATP = lysidine(34) in tRNA(Ile2) + AMP + diphosphate + H(+). Functionally, ligates lysine onto the cytidine present at position 34 of the AUA codon-specific tRNA(Ile) that contains the anticodon CAU, in an ATP-dependent manner. Cytidine is converted to lysidine, thus changing the amino acid specificity of the tRNA from methionine to isoleucine. In Wolbachia sp. subsp. Brugia malayi (strain TRS), this protein is tRNA(Ile)-lysidine synthase.